The sequence spans 207 residues: Large ribosomal subunit protein eL13 (207 aa).

This sequence belongs to the eukaryotic ribosomal protein eL13 family. Component of the 60S large ribosomal subunit (LSU).

The protein localises to the cytoplasm. Its function is as follows. Component of the ribosome, a large ribonucleoprotein complex responsible for the synthesis of proteins in the cell. The small ribosomal subunit (SSU) binds messenger RNAs (mRNAs) and translates the encoded message by selecting cognate aminoacyl-transfer RNA (tRNA) molecules. The large subunit (LSU) contains the ribosomal catalytic site termed the peptidyl transferase center (PTC), which catalyzes the formation of peptide bonds, thereby polymerizing the amino acids delivered by tRNAs into a polypeptide chain. The nascent polypeptides leave the ribosome through a tunnel in the LSU and interact with protein factors that function in enzymatic processing, targeting, and the membrane insertion of nascent chains at the exit of the ribosomal tunnel. As part of the LSU, it is probably required for its formation and the maturation of rRNAs. The chain is Large ribosomal subunit protein eL13 (rpl-13) from Caenorhabditis elegans.